The chain runs to 82 residues: uncharacterized protein (82 aa).

The disordered stretch occupies residues 22–82 (LRRSRSSRNG…WPPPCAFTPG (61 aa)). Over residues 47–58 (HRGEPGHPRMEE) the composition is skewed to basic and acidic residues. The span at 73 to 82 (WPPPCAFTPG) shows a compositional bias: pro residues.

This is an uncharacterized protein from Homo sapiens (Human).